Reading from the N-terminus, the 139-residue chain is Large ribosomal subunit protein uL16c (139 aa).

A compositionally biased stretch (basic residues) spans 1 to 17 (MLSPKKTKFRKQHRGRM). The tract at residues 1–23 (MLSPKKTKFRKQHRGRMKGSASK) is disordered.

This sequence belongs to the universal ribosomal protein uL16 family. In terms of assembly, part of the 50S ribosomal subunit.

It is found in the plastid. The protein localises to the chloroplast. The chain is Large ribosomal subunit protein uL16c from Porphyra purpurea (Red seaweed).